A 129-amino-acid chain; its full sequence is Prefoldin subunit 6 (129 aa).

Position 2 is an N-acetylalanine (alanine 2). Lysine 21 carries the N6-acetyllysine modification. Residue lysine 66 is modified to N6-acetyllysine; alternate. A Glycyl lysine isopeptide (Lys-Gly) (interchain with G-Cter in SUMO1); alternate cross-link involves residue lysine 66. Lysine 66 participates in a covalent cross-link: Glycyl lysine isopeptide (Lys-Gly) (interchain with G-Cter in SUMO2); alternate.

The protein belongs to the prefoldin subunit beta family. Heterohexamer of two PFD-alpha type and four PFD-beta type subunits. Component of the PAQosome complex which is responsible for the biogenesis of several protein complexes and which consists of R2TP complex members RUVBL1, RUVBL2, RPAP3 and PIH1D1, URI complex members PFDN2, PFDN6, PDRG1, UXT and URI1 as well as ASDURF, POLR2E and DNAAF10/WDR92.

Functionally, binds specifically to cytosolic chaperonin (c-CPN) and transfers target proteins to it. Binds to nascent polypeptide chain and promotes folding in an environment in which there are many competing pathways for nonnative proteins. This chain is Prefoldin subunit 6 (PFDN6), found in Homo sapiens (Human).